A 513-amino-acid chain; its full sequence is Ribonuclease Y (513 aa).

The chain crosses the membrane as a helical span at residues 6 to 26 (YIIIAVVIIIICVILGLYVVD). Residues 35 to 59 (EASKEARRLKEEAERDAEAKKKEAI) are disordered. The KH domain occupies 203–288 (TVHVVNLPND…EMVEKAKKEV (86 aa)). The 94-residue stretch at 329 to 422 (VLKHSIEVSH…VQAADAISAA (94 aa)) folds into the HD domain.

The protein belongs to the RNase Y family.

The protein localises to the cell membrane. Its function is as follows. Endoribonuclease that initiates mRNA decay. This is Ribonuclease Y from Clostridium botulinum (strain Okra / Type B1).